The chain runs to 400 residues: GTPase Obg (400 aa).

The region spanning 1 to 159 (MRFVDEAVIT…REIRLELKVL (159 aa)) is the Obg domain. Residues 160–333 (ADVGLLGMPN…VVYYLMDQIE (174 aa)) enclose the OBG-type G domain. Residues 166 to 173 (GMPNAGKS), 191 to 195 (FTTMV), 213 to 216 (DIPG), 283 to 286 (NKLD), and 314 to 316 (SGL) each bind GTP. The Mg(2+) site is built by serine 173 and threonine 193.

Belongs to the TRAFAC class OBG-HflX-like GTPase superfamily. OBG GTPase family. In terms of assembly, monomer. Mg(2+) is required as a cofactor.

It is found in the cytoplasm. An essential GTPase which binds GTP, GDP and possibly (p)ppGpp with moderate affinity, with high nucleotide exchange rates and a fairly low GTP hydrolysis rate. Plays a role in control of the cell cycle, stress response, ribosome biogenesis and in those bacteria that undergo differentiation, in morphogenesis control. This Acinetobacter baylyi (strain ATCC 33305 / BD413 / ADP1) protein is GTPase Obg.